The primary structure comprises 633 residues: DNA mismatch repair protein MutL (633 aa).

This sequence belongs to the DNA mismatch repair MutL/HexB family.

This protein is involved in the repair of mismatches in DNA. It is required for dam-dependent methyl-directed DNA mismatch repair. May act as a 'molecular matchmaker', a protein that promotes the formation of a stable complex between two or more DNA-binding proteins in an ATP-dependent manner without itself being part of a final effector complex. The protein is DNA mismatch repair protein MutL of Macrococcus caseolyticus (strain JCSC5402) (Macrococcoides caseolyticum).